We begin with the raw amino-acid sequence, 156 residues long: Small ribosomal subunit protein uS7 (156 aa).

The protein belongs to the universal ribosomal protein uS7 family. Part of the 30S ribosomal subunit. Contacts proteins S9 and S11.

Its function is as follows. One of the primary rRNA binding proteins, it binds directly to 16S rRNA where it nucleates assembly of the head domain of the 30S subunit. Is located at the subunit interface close to the decoding center, probably blocks exit of the E-site tRNA. This chain is Small ribosomal subunit protein uS7, found in Jannaschia sp. (strain CCS1).